A 357-amino-acid chain; its full sequence is Cholinesterase 1 (357 aa).

Ser-112 serves as the catalytic Acyl-ester intermediate. The cysteines at positions 166 and 179 are disulfide-linked. Active-site charge relay system residues include Glu-244 and His-357.

It belongs to the type-B carboxylesterase/lipase family.

It carries out the reaction an acylcholine + H2O = a carboxylate + choline + H(+). In Branchiostoma lanceolatum (Common lancelet), this protein is Cholinesterase 1 (CHE1).